The chain runs to 409 residues: LL-diaminopimelate aminotransferase (409 aa).

Residues Tyr-15 and Gly-42 each coordinate substrate. Pyridoxal 5'-phosphate is bound by residues Tyr-72, 108-109 (AK), Tyr-132, Asn-186, Tyr-217, and 245-247 (SFS). Residues Lys-109, Tyr-132, and Asn-186 each coordinate substrate. Position 248 is an N6-(pyridoxal phosphate)lysine (Lys-248). Pyridoxal 5'-phosphate contacts are provided by Arg-256 and Asn-291. Substrate is bound by residues Asn-291 and Arg-387.

This sequence belongs to the class-I pyridoxal-phosphate-dependent aminotransferase family. LL-diaminopimelate aminotransferase subfamily. In terms of assembly, homodimer. It depends on pyridoxal 5'-phosphate as a cofactor.

The enzyme catalyses (2S,6S)-2,6-diaminopimelate + 2-oxoglutarate = (S)-2,3,4,5-tetrahydrodipicolinate + L-glutamate + H2O + H(+). Its pathway is amino-acid biosynthesis; L-lysine biosynthesis via DAP pathway; LL-2,6-diaminopimelate from (S)-tetrahydrodipicolinate (aminotransferase route): step 1/1. Its function is as follows. Involved in the synthesis of meso-diaminopimelate (m-DAP or DL-DAP), required for both lysine and peptidoglycan biosynthesis. Catalyzes the direct conversion of tetrahydrodipicolinate to LL-diaminopimelate. This is LL-diaminopimelate aminotransferase from Phocaeicola vulgatus (strain ATCC 8482 / DSM 1447 / JCM 5826 / CCUG 4940 / NBRC 14291 / NCTC 11154) (Bacteroides vulgatus).